Reading from the N-terminus, the 460-residue chain is Cysteine--tRNA ligase (460 aa).

Residue Cys28 coordinates Zn(2+). The 'HIGH' region signature appears at 30-40 (VTIYDLCHIGH). Zn(2+)-binding residues include Cys209, His234, and Glu238. The 'KMSKS' region motif lies at 266–270 (KMSKS). Lys269 serves as a coordination point for ATP.

The protein belongs to the class-I aminoacyl-tRNA synthetase family. In terms of assembly, monomer. Zn(2+) is required as a cofactor.

It is found in the cytoplasm. The catalysed reaction is tRNA(Cys) + L-cysteine + ATP = L-cysteinyl-tRNA(Cys) + AMP + diphosphate. The polypeptide is Cysteine--tRNA ligase (Vibrio parahaemolyticus serotype O3:K6 (strain RIMD 2210633)).